The chain runs to 78 residues: Broad mercury transporter MerE (78 aa).

The next 2 helical transmembrane spans lie at 19-39 (LWGA…AAVL) and 47-67 (FLGE…VLAV).

The protein localises to the cell inner membrane. Broad mercury transporter that mediates the transport of both CH(3)Hg(I) and Hg(II) across the membrane. This is Broad mercury transporter MerE from Shigella flexneri.